A 276-amino-acid polypeptide reads, in one-letter code: 2-dehydro-3-deoxyphosphooctonate aldolase (276 aa).

The protein belongs to the KdsA family.

Its subcellular location is the cytoplasm. It carries out the reaction D-arabinose 5-phosphate + phosphoenolpyruvate + H2O = 3-deoxy-alpha-D-manno-2-octulosonate-8-phosphate + phosphate. It functions in the pathway carbohydrate biosynthesis; 3-deoxy-D-manno-octulosonate biosynthesis; 3-deoxy-D-manno-octulosonate from D-ribulose 5-phosphate: step 2/3. The protein operates within bacterial outer membrane biogenesis; lipopolysaccharide biosynthesis. This chain is 2-dehydro-3-deoxyphosphooctonate aldolase, found in Xanthomonas campestris pv. campestris (strain 8004).